The chain runs to 114 residues: Reprimo-like protein (114 aa).

The helical transmembrane segment at 61–81 (VVQIAVLCVLSLTVMFGIFFL) threads the bilayer.

This sequence belongs to the reprimo family.

The protein resides in the membrane. This chain is Reprimo-like protein (rprml), found in Danio rerio (Zebrafish).